The sequence spans 334 residues: Transposase for insertion sequence element IS1328 (334 aa).

The protein belongs to the transposase IS1111A/IS1328/IS1533 family.

Required for the transposition of the insertion element. The protein is Transposase for insertion sequence element IS1328 of Yersinia enterocolitica.